The sequence spans 298 residues: Small ribosomal subunit protein uS3 (298 aa).

Residues 38 to 106 (IRRRLSRGME…QVQLNILEVK (69 aa)) form the KH type-2 domain. The segment at 212–298 (KQKQQESEVR…EPRADEKTEG (87 aa)) is disordered. A compositionally biased stretch (basic and acidic residues) spans 214 to 237 (KQQESEVRPPRGERGERGGRPERG). Over residues 265–278 (GSAQSPEQAQTSGD) the composition is skewed to polar residues.

The protein belongs to the universal ribosomal protein uS3 family. In terms of assembly, part of the 30S ribosomal subunit. Forms a tight complex with proteins S10 and S14.

Functionally, binds the lower part of the 30S subunit head. Binds mRNA in the 70S ribosome, positioning it for translation. The chain is Small ribosomal subunit protein uS3 from Saccharopolyspora erythraea (strain ATCC 11635 / DSM 40517 / JCM 4748 / NBRC 13426 / NCIMB 8594 / NRRL 2338).